Consider the following 181-residue polypeptide: Large ribosomal subunit protein uL5 (181 aa).

Belongs to the universal ribosomal protein uL5 family. In terms of assembly, part of the 50S ribosomal subunit; part of the 5S rRNA/L5/L18/L25 subcomplex. Contacts the 5S rRNA and the P site tRNA. Forms a bridge to the 30S subunit in the 70S ribosome.

Functionally, this is one of the proteins that bind and probably mediate the attachment of the 5S RNA into the large ribosomal subunit, where it forms part of the central protuberance. In the 70S ribosome it contacts protein S13 of the 30S subunit (bridge B1b), connecting the 2 subunits; this bridge is implicated in subunit movement. Contacts the P site tRNA; the 5S rRNA and some of its associated proteins might help stabilize positioning of ribosome-bound tRNAs. The sequence is that of Large ribosomal subunit protein uL5 from Helicobacter hepaticus (strain ATCC 51449 / 3B1).